The following is a 374-amino-acid chain: Chaperone protein DnaJ (374 aa).

A J domain is found at 5 to 70 (DYYEVLGVNR…RKRASYDQFG (66 aa)). The CR-type zinc-finger motif lies at 133–210 (GLSRTIKVPT…CHGQGRQQQT (78 aa)). Residues cysteine 146, cysteine 149, cysteine 162, cysteine 165, cysteine 184, cysteine 187, cysteine 198, and cysteine 201 each contribute to the Zn(2+) site. CXXCXGXG motif repeat units lie at residues 146–153 (CKTCNGSG), 162–169 (CPRCNGSG), 184–191 (CSVCRGRG), and 198–205 (CTDCHGQG).

Belongs to the DnaJ family. Homodimer. It depends on Zn(2+) as a cofactor.

It is found in the cytoplasm. Its function is as follows. Participates actively in the response to hyperosmotic and heat shock by preventing the aggregation of stress-denatured proteins and by disaggregating proteins, also in an autonomous, DnaK-independent fashion. Unfolded proteins bind initially to DnaJ; upon interaction with the DnaJ-bound protein, DnaK hydrolyzes its bound ATP, resulting in the formation of a stable complex. GrpE releases ADP from DnaK; ATP binding to DnaK triggers the release of the substrate protein, thus completing the reaction cycle. Several rounds of ATP-dependent interactions between DnaJ, DnaK and GrpE are required for fully efficient folding. Also involved, together with DnaK and GrpE, in the DNA replication of plasmids through activation of initiation proteins. The sequence is that of Chaperone protein DnaJ from Coxiella burnetii (strain CbuG_Q212) (Coxiella burnetii (strain Q212)).